The sequence spans 78 residues: U7-lycotoxin-Ls1d (78 aa).

Residues 1 to 22 (MKLIIFTGLALLLIVSLIDVEA) form the signal peptide. A propeptide spanning residues 23-26 (QNEG) is cleaved from the precursor.

This sequence belongs to the neurotoxin 19 (CSTX) family. 07 (U7-Lctx) subfamily. In terms of processing, contains 4 disulfide bonds. In terms of tissue distribution, expressed by the venom gland.

It localises to the secreted. The sequence is that of U7-lycotoxin-Ls1d from Lycosa singoriensis (Wolf spider).